The primary structure comprises 70 residues: Cold shock-like protein CspF (70 aa).

The region spanning 7 to 67 (GIVKTFDGKS…GLRGPSAANV (61 aa)) is the CSD domain.

The protein resides in the cytoplasm. This chain is Cold shock-like protein CspF (cspF), found in Escherichia coli (strain K12).